Reading from the N-terminus, the 557-residue chain is Putative UDP-glucuronate:xylan alpha-glucuronosyltransferase 4 (557 aa).

Residues 11 to 31 (KIFMIYLILVSLSLLGLILPF) traverse the membrane as a helical; Signal-anchor for type II membrane protein segment. 2 residues coordinate Mn(2+): Asp365 and Asp367. Substrate is bound by residues 365–367 (DAD), 394–396 (NSG), 421–425 (NGGDQ), and 466–471 (HYLGLK). His466 provides a ligand contact to Mn(2+).

Belongs to the glycosyltransferase 8 family. Glycogenin subfamily. Requires Mn(2+) as cofactor.

The protein resides in the golgi apparatus membrane. Its function is as follows. May be involved in the substitutions of the xylan backbone in stem glucuronoxylan. In Arabidopsis thaliana (Mouse-ear cress), this protein is Putative UDP-glucuronate:xylan alpha-glucuronosyltransferase 4 (GUX4).